The chain runs to 379 residues: Lipoyl synthase 2, mitochondrial (379 aa).

[4Fe-4S] cluster-binding residues include C106, C111, C117, C137, C141, C144, and S352. The Radical SAM core domain maps to 122 to 341; the sequence is EHGTQTATIM…EERGNELGFL (220 aa).

The protein belongs to the radical SAM superfamily. Lipoyl synthase family. Requires [4Fe-4S] cluster as cofactor.

The protein resides in the mitochondrion. The enzyme catalyses [[Fe-S] cluster scaffold protein carrying a second [4Fe-4S](2+) cluster] + N(6)-octanoyl-L-lysyl-[protein] + 2 oxidized [2Fe-2S]-[ferredoxin] + 2 S-adenosyl-L-methionine + 4 H(+) = [[Fe-S] cluster scaffold protein] + N(6)-[(R)-dihydrolipoyl]-L-lysyl-[protein] + 4 Fe(3+) + 2 hydrogen sulfide + 2 5'-deoxyadenosine + 2 L-methionine + 2 reduced [2Fe-2S]-[ferredoxin]. It participates in protein modification; protein lipoylation via endogenous pathway; protein N(6)-(lipoyl)lysine from octanoyl-[acyl-carrier-protein]: step 2/2. Functionally, catalyzes the radical-mediated insertion of two sulfur atoms into the C-6 and C-8 positions of the octanoyl moiety bound to the lipoyl domains of lipoate-dependent enzymes, thereby converting the octanoylated domains into lipoylated derivatives. The chain is Lipoyl synthase 2, mitochondrial from Drosophila yakuba (Fruit fly).